The primary structure comprises 181 residues: Regulator of G-protein signaling 5 (181 aa).

The 117-residue stretch at 64–180 folds into the RGS domain; sequence SLDKLLQNSY…VRSEFYKELI (117 aa).

As to expression, expressed in heart and muscle.

Its subcellular location is the cytoplasm. The protein resides in the membrane. Inhibits signal transduction by increasing the GTPase activity of G protein alpha subunits thereby driving them into their inactive GDP-bound form. Binds to G(i)-alpha and G(o)-alpha, but not to G(s)-alpha. The polypeptide is Regulator of G-protein signaling 5 (Rgs5) (Mus musculus (Mouse)).